The primary structure comprises 468 residues: 3-isopropylmalate dehydratase large subunit (468 aa).

Cys347, Cys407, and Cys410 together coordinate [4Fe-4S] cluster.

This sequence belongs to the aconitase/IPM isomerase family. LeuC type 1 subfamily. In terms of assembly, heterodimer of LeuC and LeuD. The cofactor is [4Fe-4S] cluster.

It carries out the reaction (2R,3S)-3-isopropylmalate = (2S)-2-isopropylmalate. It participates in amino-acid biosynthesis; L-leucine biosynthesis; L-leucine from 3-methyl-2-oxobutanoate: step 2/4. Catalyzes the isomerization between 2-isopropylmalate and 3-isopropylmalate, via the formation of 2-isopropylmaleate. This chain is 3-isopropylmalate dehydratase large subunit, found in Synechococcus elongatus (strain ATCC 33912 / PCC 7942 / FACHB-805) (Anacystis nidulans R2).